The sequence spans 446 residues: Na(+)-translocating NADH-quinone reductase subunit A (446 aa).

It belongs to the NqrA family. Composed of six subunits; NqrA, NqrB, NqrC, NqrD, NqrE and NqrF.

It carries out the reaction a ubiquinone + n Na(+)(in) + NADH + H(+) = a ubiquinol + n Na(+)(out) + NAD(+). NQR complex catalyzes the reduction of ubiquinone-1 to ubiquinol by two successive reactions, coupled with the transport of Na(+) ions from the cytoplasm to the periplasm. NqrA to NqrE are probably involved in the second step, the conversion of ubisemiquinone to ubiquinol. In Pasteurella multocida (strain Pm70), this protein is Na(+)-translocating NADH-quinone reductase subunit A.